The following is a 153-amino-acid chain: Interleukin-2 (153 aa).

A signal peptide spans 1-20 (MYKVQLLSCIALTLALLTSS). O-linked (GalNAc...) threonine glycosylation occurs at threonine 23. A disulfide bridge links cysteine 78 with cysteine 125. An N-linked (GlcNAc...) asparagine glycan is attached at asparagine 111.

The protein belongs to the IL-2 family.

It is found in the secreted. Its function is as follows. Cytokine produced by activated CD4-positive helper T-cells and to a lesser extend activated CD8-positive T-cells and natural killer (NK) cells that plays pivotal roles in the immune response and tolerance. Binds to a receptor complex composed of either the high-affinity trimeric IL-2R (IL2RA/CD25, IL2RB/CD122 and IL2RG/CD132) or the low-affinity dimeric IL-2R (IL2RB and IL2RG). Interaction with the receptor leads to oligomerization and conformation changes in the IL-2R subunits resulting in downstream signaling starting with phosphorylation of JAK1 and JAK3. In turn, JAK1 and JAK3 phosphorylate the receptor to form a docking site leading to the phosphorylation of several substrates including STAT5. This process leads to activation of several pathways including STAT, phosphoinositide-3-kinase/PI3K and mitogen-activated protein kinase/MAPK pathways. Functions as a T-cell growth factor and can increase NK-cell cytolytic activity as well. Promotes strong proliferation of activated B-cells and subsequently immunoglobulin production. Plays a pivotal role in regulating the adaptive immune system by controlling the survival and proliferation of regulatory T-cells, which are required for the maintenance of immune tolerance. Moreover, participates in the differentiation and homeostasis of effector T-cell subsets, including Th1, Th2, Th17 as well as memory CD8-positive T-cells. The chain is Interleukin-2 (IL2) from Oryctolagus cuniculus (Rabbit).